Reading from the N-terminus, the 704-residue chain is Elongation factor G (704 aa).

Residues 8–291 (DKVRNIGIMA…AVVDYLASPL (284 aa)) form the tr-type G domain. GTP-binding positions include 17–24 (AHIDAGKT), 90–94 (DTPGH), and 144–147 (NKMD).

The protein belongs to the TRAFAC class translation factor GTPase superfamily. Classic translation factor GTPase family. EF-G/EF-2 subfamily.

The protein localises to the cytoplasm. Catalyzes the GTP-dependent ribosomal translocation step during translation elongation. During this step, the ribosome changes from the pre-translocational (PRE) to the post-translocational (POST) state as the newly formed A-site-bound peptidyl-tRNA and P-site-bound deacylated tRNA move to the P and E sites, respectively. Catalyzes the coordinated movement of the two tRNA molecules, the mRNA and conformational changes in the ribosome. This Chlorobium luteolum (strain DSM 273 / BCRC 81028 / 2530) (Pelodictyon luteolum) protein is Elongation factor G.